A 913-amino-acid chain; its full sequence is Cadherin-4 (913 aa).

The first 19 residues, 1–19, serve as a signal peptide directing secretion; it reads MRTGSRLLLVLLVWGSAAA. A propeptide spanning residues 20–166 is cleaved from the precursor; the sequence is LNGDLTVRPT…SAKGLRRQKR (147 aa). Cadherin domains are found at residues 167–274, 275–389, 390–504, 505–610, and 611–721; these read DWVI…RPEF, INQV…PPEF, TTST…APYF, PTNH…DNAP, and ELLP…TIGA. Topologically, residues 167–731 are extracellular; it reads DWVIPPINVP…VAAAGLGTGA (565 aa). N280, N409, N554, N629, N658, and N699 each carry an N-linked (GlcNAc...) asparagine glycan. Residues 732 to 753 form a helical membrane-spanning segment; sequence IIAILICIIILLTMVLLFVVWM. Residues 754–913 lie on the Cytoplasmic side of the membrane; it reads KRREKERHTK…ADMYGGGEED (160 aa).

Embryonic brain and neuronal retina.

Its subcellular location is the cell membrane. Cadherins are calcium-dependent cell adhesion proteins. They preferentially interact with themselves in a homophilic manner in connecting cells; cadherins may thus contribute to the sorting of heterogeneous cell types. May play an important role in retinal development. The polypeptide is Cadherin-4 (CDH4) (Gallus gallus (Chicken)).